We begin with the raw amino-acid sequence, 146 residues long: MKLNELKPNEGSRRNRKRVGRGTSSGYGKTAGRGQKGQLARTGGKTRLGFEGGQMPLFRRMPKRGFKNVNRKEYAIINLNDLNRFDDGSEVTIDTLKSSGLVKKELAGVKLLANGELKVKLTVKVNKVSEAAKKAVEAAGGTVEVI.

The span at 1–13 shows a compositional bias: basic and acidic residues; sequence MKLNELKPNEGSR. The tract at residues 1-54 is disordered; that stretch reads MKLNELKPNEGSRRNRKRVGRGTSSGYGKTAGRGQKGQLARTGGKTRLGFEGGQ. Gly residues predominate over residues 23–35; sequence TSSGYGKTAGRGQ.

It belongs to the universal ribosomal protein uL15 family. As to quaternary structure, part of the 50S ribosomal subunit.

Its function is as follows. Binds to the 23S rRNA. The chain is Large ribosomal subunit protein uL15 from Lactobacillus gasseri (strain ATCC 33323 / DSM 20243 / BCRC 14619 / CIP 102991 / JCM 1131 / KCTC 3163 / NCIMB 11718 / NCTC 13722 / AM63).